A 316-amino-acid polypeptide reads, in one-letter code: 4-hydroxy-3-methylbut-2-enyl diphosphate reductase (316 aa).

Cysteine 18 serves as a coordination point for [4Fe-4S] cluster. (2E)-4-hydroxy-3-methylbut-2-enyl diphosphate contacts are provided by histidine 47 and histidine 80. The dimethylallyl diphosphate site is built by histidine 47 and histidine 80. Isopentenyl diphosphate is bound by residues histidine 47 and histidine 80. Cysteine 102 contributes to the [4Fe-4S] cluster binding site. Histidine 130 is a binding site for (2E)-4-hydroxy-3-methylbut-2-enyl diphosphate. Histidine 130 is a binding site for dimethylallyl diphosphate. Histidine 130 is an isopentenyl diphosphate binding site. Catalysis depends on glutamate 132, which acts as the Proton donor. Position 171 (threonine 171) interacts with (2E)-4-hydroxy-3-methylbut-2-enyl diphosphate. Position 201 (cysteine 201) interacts with [4Fe-4S] cluster. Residues serine 229, serine 230, asparagine 231, and serine 274 each coordinate (2E)-4-hydroxy-3-methylbut-2-enyl diphosphate. The dimethylallyl diphosphate site is built by serine 229, serine 230, asparagine 231, and serine 274. Serine 229, serine 230, asparagine 231, and serine 274 together coordinate isopentenyl diphosphate.

The protein belongs to the IspH family. The cofactor is [4Fe-4S] cluster.

It catalyses the reaction isopentenyl diphosphate + 2 oxidized [2Fe-2S]-[ferredoxin] + H2O = (2E)-4-hydroxy-3-methylbut-2-enyl diphosphate + 2 reduced [2Fe-2S]-[ferredoxin] + 2 H(+). The catalysed reaction is dimethylallyl diphosphate + 2 oxidized [2Fe-2S]-[ferredoxin] + H2O = (2E)-4-hydroxy-3-methylbut-2-enyl diphosphate + 2 reduced [2Fe-2S]-[ferredoxin] + 2 H(+). The protein operates within isoprenoid biosynthesis; dimethylallyl diphosphate biosynthesis; dimethylallyl diphosphate from (2E)-4-hydroxy-3-methylbutenyl diphosphate: step 1/1. It functions in the pathway isoprenoid biosynthesis; isopentenyl diphosphate biosynthesis via DXP pathway; isopentenyl diphosphate from 1-deoxy-D-xylulose 5-phosphate: step 6/6. Catalyzes the conversion of 1-hydroxy-2-methyl-2-(E)-butenyl 4-diphosphate (HMBPP) into a mixture of isopentenyl diphosphate (IPP) and dimethylallyl diphosphate (DMAPP). Acts in the terminal step of the DOXP/MEP pathway for isoprenoid precursor biosynthesis. This chain is 4-hydroxy-3-methylbut-2-enyl diphosphate reductase, found in Paracoccus denitrificans (strain Pd 1222).